Consider the following 541-residue polypeptide: Protein MGF 505-10R (541 aa).

This sequence belongs to the asfivirus MGF 505 family.

Its function is as follows. Plays a role in virus cell tropism, and may be required for efficient virus replication in macrophages. The sequence is that of Protein MGF 505-10R from Ornithodoros (relapsing fever ticks).